Here is a 1861-residue protein sequence, read N- to C-terminus: Golgi-specific brefeldin A-resistance guanine nucleotide exchange factor 1 (1861 aa).

The tract at residues 1 to 211 is DCB; DCB:DCB domain and DCB:HUS domain interaction; the sequence is MVDKNIYIIQ…EPKSYVGTNM (211 aa). The interaction with RAB1B stretch occupies residues 1 to 380; that stretch reads MVDKNIYIIQ…SVHDMDYVNP (380 aa). 2 disordered regions span residues 210–264 and 289–353; these read NMKK…LTGG and CTDS…VESI. The span at 227–241 shows a compositional bias: basic residues; it reads WKKQKRSPRPPRHTT. Residues 253–262 show a composition bias toward polar residues; the sequence is NGATLPSNLT. Phosphoserine occurs at positions 349 and 352. Thr507 carries the post-translational modification Phosphothreonine. An HUS; DCB:HUS domain interaction region spans residues 530 to 550; sequence RIPSFVTELYINYDCDYYCSN. Positions 603 to 634 are disordered; sequence QEKKETARPGFEAVDGNPETNKSERATSDGKS. One can recognise an SEC7 domain in the interval 692-882; sequence ELIEIKNKKK…EDMYHAIKNE (191 aa). The tract at residues 886–1372 is phosphatidylinositol-phosphate binding; required for translocation to the leading edge and for ARF1 activation upon GPCR signaling; it reads MPEEQTGLVR…LSRPGPSPLV (487 aa). Residues 1286 to 1296 show a composition bias toward low complexity; that stretch reads TARADAPDAGA. The interval 1286-1335 is disordered; it reads TARADAPDAGAQSDSELPSYHQNDVSLDRGYTSDSEVYTDHGRPGKIHRS. Positions 1297–1310 are enriched in polar residues; it reads QSDSELPSYHQNDV. The residue at position 1298 (Ser1298) is a Phosphoserine. Position 1316 is a phosphotyrosine (Tyr1316). 3 positions are modified to phosphoserine: Ser1318, Ser1320, and Ser1335. Thr1337 is subject to Phosphothreonine. 2 disordered regions span residues 1431 to 1486 and 1727 to 1812; these read GCKS…EGVP and PMPA…PLIL. Residues 1434–1448 show a composition bias toward basic and acidic residues; it reads SQDKRSKSHKYDSKG. Ser1477, Ser1775, and Ser1786 each carry phosphoserine. The span at 1776–1793 shows a compositional bias: low complexity; it reads TRAPSSSSPGSPMASSPS.

In terms of assembly, can form homodimers and probably homotetramers. Interacts with COPG1; the interaction is independent on ARF1 activation. Interacts with ARF1, ARF3, ARF4 and ARF5. Interacts with RAB1B (GTP-bound form); required for GBF1 membrane association. Interacts with GGA1, GGA2 and GGA3. Interacts with USO1. Interacts (via SEC7 domain) with PNPLA2 (via C-terminus); the interaction is direct. Interacts with ARMH3.

Its subcellular location is the golgi apparatus. The protein localises to the cis-Golgi network. It is found in the endoplasmic reticulum-Golgi intermediate compartment. It localises to the trans-Golgi network. The protein resides in the cytoplasm. Its subcellular location is the lipid droplet. The protein localises to the membrane. In terms of biological role, guanine-nucleotide exchange factor (GEF) for members of the Arf family of small GTPases involved in trafficking in the early secretory pathway; its GEF activity initiates the coating of nascent vesicles via the localized generation of activated ARFs through replacement of GDP with GTP. Recruitment to cis-Golgi membranes requires membrane association of Arf-GDP and can be regulated by ARF1, ARF3, ARF4 and ARF5. Involved in the recruitment of the COPI coat complex to the endoplasmic reticulum exit sites (ERES), and the endoplasmic reticulum-Golgi intermediate (ERGIC) and cis-Golgi compartments which implicates ARF1 activation. Involved in COPI vesicle-dependent retrograde transport from the ERGIC and cis-Golgi compartments to the endoplasmic reticulum (ER). Involved in the trans-Golgi network recruitment of GGA1, GGA2, GGA3, BIG1, BIG2, and the AP-1 adaptor protein complex related to chlathrin-dependent transport; the function requires its GEF activity (probably at least in part on ARF4 and ARF5). Has GEF activity towards ARF1. Has in vitro GEF activity towards ARF5. Involved in the processing of PSAP. Required for the assembly of the Golgi apparatus. The AMPK-phosphorylated form is involved in Golgi disassembly during mitotis and under stress conditions. May be involved in the COPI vesicle-dependent recruitment of PNPLA2 to lipid droplets; however, this function is under debate. In neutrophils, involved in G protein-coupled receptor (GPCR)-mediated chemotaxis und superoxide production. Proposed to be recruited by phosphatidylinositol-phosphates generated upon GPCR stimulation to the leading edge where it recruits and activates ARF1, and is involved in recruitment of GIT2 and the NADPH oxidase complex. Plays a role in maintaining mitochondrial morphology. The sequence is that of Golgi-specific brefeldin A-resistance guanine nucleotide exchange factor 1 from Mus musculus (Mouse).